A 56-amino-acid chain; its full sequence is Ovomucoid (56 aa).

One can recognise a Kazal-like domain in the interval 6 to 56; sequence VDCSEYPKPACMSEYRPLCGSDNKTYVNKCNFCNAVVESNGTLTLSHFGKC. Intrachain disulfides connect Cys-8–Cys-38, Cys-16–Cys-35, and Cys-24–Cys-56. Asn-45 carries an N-linked (GlcNAc...) asparagine glycan.

The protein localises to the secreted. The chain is Ovomucoid from Colinus virginianus (Northern bobwhite).